A 275-amino-acid chain; its full sequence is Dermonecrotic toxin SpaSicTox-betaIIA3 (275 aa).

His-5 is an active-site residue. Mg(2+) contacts are provided by Glu-25 and Asp-27. Residue His-41 is the Nucleophile of the active site. 2 cysteine pairs are disulfide-bonded: Cys-45–Cys-51 and Cys-47–Cys-190. Asp-85 is a binding site for Mg(2+).

The protein belongs to the arthropod phospholipase D family. Class II subfamily. Requires Mg(2+) as cofactor. Expressed by the venom gland.

It is found in the secreted. It carries out the reaction an N-(acyl)-sphingosylphosphocholine = an N-(acyl)-sphingosyl-1,3-cyclic phosphate + choline. The enzyme catalyses an N-(acyl)-sphingosylphosphoethanolamine = an N-(acyl)-sphingosyl-1,3-cyclic phosphate + ethanolamine. The catalysed reaction is a 1-acyl-sn-glycero-3-phosphocholine = a 1-acyl-sn-glycero-2,3-cyclic phosphate + choline. It catalyses the reaction a 1-acyl-sn-glycero-3-phosphoethanolamine = a 1-acyl-sn-glycero-2,3-cyclic phosphate + ethanolamine. Dermonecrotic toxins cleave the phosphodiester linkage between the phosphate and headgroup of certain phospholipids (sphingolipid and lysolipid substrates), forming an alcohol (often choline) and a cyclic phosphate. This toxin acts on sphingomyelin (SM). It may also act on ceramide phosphoethanolamine (CPE), lysophosphatidylcholine (LPC) and lysophosphatidylethanolamine (LPE), but not on lysophosphatidylserine (LPS), and lysophosphatidylglycerol (LPG). It acts by transphosphatidylation, releasing exclusively cyclic phosphate products as second products. Induces dermonecrosis, hemolysis, increased vascular permeability, edema, inflammatory response, and platelet aggregation. This is Dermonecrotic toxin SpaSicTox-betaIIA3 from Sicarius patagonicus (Six-eyed sand spider).